Reading from the N-terminus, the 303-residue chain is Bidirectional sugar transporter SWEET14 (303 aa).

The Extracellular segment spans residues 1 to 9 (MAGMSLQHP). A helical transmembrane segment spans residues 10–30 (WAFAFGLLGNIISFMTYLAPL). Residues 13–98 (AFGLLGNIIS…AVYLVYAPKK (86 aa)) form the MtN3/slv 1 domain. The Cytoplasmic portion of the chain corresponds to 31–44 (PTFYRIYKSKSTQG). A helical transmembrane segment spans residues 45 to 65 (FQSVPYVVALFSAMLWIYYAL). At 66-72 (LKSDECL) the chain is on the extracellular side. The helical transmembrane segment at 73 to 93 (LITINSAGCVIETIYIAVYLV) threads the bilayer. Residues 94–105 (YAPKKAKMFTAK) lie on the Cytoplasmic side of the membrane. The helical transmembrane segment at 106-126 (LLLLVNVGVFGLILLLTLLLS) threads the bilayer. The Extracellular portion of the chain corresponds to 127–133 (AGDRRIV). A helical membrane pass occupies residues 134-154 (VLGWVCVGFSVSVFVAPLSII). The region spanning 134 to 217 (VLGWVCVGFS…MGLYAMYRNS (84 aa)) is the MtN3/slv 2 domain. At 155–167 (RLVVRTKSVEFMP) the chain is on the cytoplasmic side. Residues 168 to 188 (FSLSFSLTISAVVWFLYGLLI) traverse the membrane as a helical segment. The Extracellular segment spans residues 189–192 (KDKY). A helical membrane pass occupies residues 193-213 (VALPNVLGFSFGVIQMGLYAM). The Cytoplasmic segment spans residues 214 to 303 (YRNSTPKAVL…AGAGEKKVAA (90 aa)). Residues 266 to 290 (HPVDVESPPAEAPPQEDDKAAAATA) are disordered.

The protein belongs to the SWEET sugar transporter family. As to quaternary structure, forms homooligomers and/or heterooligomers.

The protein localises to the cell membrane. Functionally, mediates both low-affinity uptake and efflux of sugar across the plasma membrane. This Oryza sativa subsp. indica (Rice) protein is Bidirectional sugar transporter SWEET14 (SWEET14).